The sequence spans 139 residues: Trafficking protein particle complex subunit 2-like protein (139 aa).

It belongs to the TRAPP small subunits family. Sedlin subfamily. As to quaternary structure, component of the multisubunit TRAPP (transport protein particle) complex, which includes at least TRAPPC2, TRAPPC2L, TRAPPC3, TRAPPC3L, TRAPPC4, TRAPPC5, TRAPPC8, TRAPPC9, TRAPPC10, TRAPPC11 and TRAPPC12. Interacts with the heterodimer TRAPPC3-TRAPPC6A.

It is found in the cytoplasm. It localises to the perinuclear region. Its subcellular location is the endoplasmic reticulum. The protein resides in the golgi apparatus. In terms of biological role, may play a role in vesicular transport from endoplasmic reticulum to Golgi. The chain is Trafficking protein particle complex subunit 2-like protein (TRAPPC2L) from Bos taurus (Bovine).